A 411-amino-acid chain; its full sequence is Serine hydroxymethyltransferase (411 aa).

Position 120–122 (120–122) interacts with (6S)-5,6,7,8-tetrahydrofolate; it reads GHL. Lys-225 is subject to N6-(pyridoxal phosphate)lysine. Residue 350 to 352 participates in (6S)-5,6,7,8-tetrahydrofolate binding; sequence SPF.

This sequence belongs to the SHMT family. In terms of assembly, homodimer. Pyridoxal 5'-phosphate serves as cofactor.

Its subcellular location is the cytoplasm. It catalyses the reaction (6R)-5,10-methylene-5,6,7,8-tetrahydrofolate + glycine + H2O = (6S)-5,6,7,8-tetrahydrofolate + L-serine. It participates in one-carbon metabolism; tetrahydrofolate interconversion. Its pathway is amino-acid biosynthesis; glycine biosynthesis; glycine from L-serine: step 1/1. Functionally, catalyzes the reversible interconversion of serine and glycine with tetrahydrofolate (THF) serving as the one-carbon carrier. This reaction serves as the major source of one-carbon groups required for the biosynthesis of purines, thymidylate, methionine, and other important biomolecules. Also exhibits THF-independent aldolase activity toward beta-hydroxyamino acids, producing glycine and aldehydes, via a retro-aldol mechanism. The chain is Serine hydroxymethyltransferase from Limosilactobacillus reuteri (strain DSM 20016) (Lactobacillus reuteri).